Here is a 234-residue protein sequence, read N- to C-terminus: Segregation and condensation protein A (234 aa).

Belongs to the ScpA family. Component of a cohesin-like complex composed of ScpA, ScpB and the Smc homodimer, in which ScpA and ScpB bind to the head domain of Smc. The presence of the three proteins is required for the association of the complex with DNA.

The protein localises to the cytoplasm. Its function is as follows. Participates in chromosomal partition during cell division. May act via the formation of a condensin-like complex containing Smc and ScpB that pull DNA away from mid-cell into both cell halves. This chain is Segregation and condensation protein A, found in Streptococcus pyogenes serotype M5 (strain Manfredo).